The sequence spans 193 residues: 3-isopropylmalate dehydratase small subunit (193 aa).

This sequence belongs to the LeuD family. LeuD type 1 subfamily. As to quaternary structure, heterodimer of LeuC and LeuD.

The enzyme catalyses (2R,3S)-3-isopropylmalate = (2S)-2-isopropylmalate. It participates in amino-acid biosynthesis; L-leucine biosynthesis; L-leucine from 3-methyl-2-oxobutanoate: step 2/4. Functionally, catalyzes the isomerization between 2-isopropylmalate and 3-isopropylmalate, via the formation of 2-isopropylmaleate. The polypeptide is 3-isopropylmalate dehydratase small subunit (Listeria innocua serovar 6a (strain ATCC BAA-680 / CLIP 11262)).